The sequence spans 525 residues: GMP synthase [glutamine-hydrolyzing] (525 aa).

Residues 9–207 form the Glutamine amidotransferase type-1 domain; it reads RILILDFGSQ…VLGICGCEAL (199 aa). The active-site Nucleophile is the Cys-86. Active-site residues include His-181 and Glu-183. The GMPS ATP-PPase domain occupies 208–400; sequence WTSATIIEDA…LGLPYDMLYR (193 aa). Position 235-241 (235-241) interacts with ATP; sequence SGGVDSS.

As to quaternary structure, homodimer.

The catalysed reaction is XMP + L-glutamine + ATP + H2O = GMP + L-glutamate + AMP + diphosphate + 2 H(+). It participates in purine metabolism; GMP biosynthesis; GMP from XMP (L-Gln route): step 1/1. In terms of biological role, catalyzes the synthesis of GMP from XMP. This is GMP synthase [glutamine-hydrolyzing] from Yersinia pseudotuberculosis serotype IB (strain PB1/+).